The primary structure comprises 187 residues: Elongation factor P (187 aa).

It belongs to the elongation factor P family.

The protein resides in the cytoplasm. It functions in the pathway protein biosynthesis; polypeptide chain elongation. Its function is as follows. Involved in peptide bond synthesis. Stimulates efficient translation and peptide-bond synthesis on native or reconstituted 70S ribosomes in vitro. Probably functions indirectly by altering the affinity of the ribosome for aminoacyl-tRNA, thus increasing their reactivity as acceptors for peptidyl transferase. This chain is Elongation factor P, found in Desulfosudis oleivorans (strain DSM 6200 / JCM 39069 / Hxd3) (Desulfococcus oleovorans).